A 102-amino-acid chain; its full sequence is MGLTEIMLVLVSLAFVATAAAHDCQNGTRPASEEKREGCDYYCWNTETKSWDKFFFGNGERCFYNNGDEGLCQNGECHLTTDSGVPNDTDAKIEETEEELEA.

The first 21 residues, 1–21, serve as a signal peptide directing secretion; it reads MGLTEIMLVLVSLAFVATAAA. N-linked (GlcNAc...) asparagine glycosylation is found at Asn26 and Asn87. Residues 83 to 102 are disordered; it reads SGVPNDTDAKIEETEEELEA.

It belongs to the salp14 family. In terms of tissue distribution, salivary gland (at protein level). Saliva (at protein level). Midgut.

It localises to the secreted. Salivary protein that facilitates blood feeding of adult ticks on vertebrate species. Inhibits the lectin pathway of complement system activation in the host. In Ixodes scapularis (Black-legged tick), this protein is Salivary protein Salp9.